A 160-amino-acid polypeptide reads, in one-letter code: 2-C-methyl-D-erythritol 2,4-cyclodiphosphate synthase (160 aa).

Residues aspartate 12 and histidine 14 each contribute to the a divalent metal cation site. 4-CDP-2-C-methyl-D-erythritol 2-phosphate-binding positions include 12–14 (DVH) and 38–39 (HS). Residue histidine 46 participates in a divalent metal cation binding. Residues 60 to 62 (DIG), 65 to 69 (FPDTD), 136 to 139 (TTTE), phenylalanine 143, and arginine 146 contribute to the 4-CDP-2-C-methyl-D-erythritol 2-phosphate site.

This sequence belongs to the IspF family. In terms of assembly, homotrimer. A divalent metal cation serves as cofactor.

It carries out the reaction 4-CDP-2-C-methyl-D-erythritol 2-phosphate = 2-C-methyl-D-erythritol 2,4-cyclic diphosphate + CMP. The protein operates within isoprenoid biosynthesis; isopentenyl diphosphate biosynthesis via DXP pathway; isopentenyl diphosphate from 1-deoxy-D-xylulose 5-phosphate: step 4/6. In terms of biological role, involved in the biosynthesis of isopentenyl diphosphate (IPP) and dimethylallyl diphosphate (DMAPP), two major building blocks of isoprenoid compounds. Catalyzes the conversion of 4-diphosphocytidyl-2-C-methyl-D-erythritol 2-phosphate (CDP-ME2P) to 2-C-methyl-D-erythritol 2,4-cyclodiphosphate (ME-CPP) with a corresponding release of cytidine 5-monophosphate (CMP). The polypeptide is 2-C-methyl-D-erythritol 2,4-cyclodiphosphate synthase (Acinetobacter baumannii (strain AB307-0294)).